A 503-amino-acid chain; its full sequence is Maturase K (503 aa).

This sequence belongs to the intron maturase 2 family. MatK subfamily.

It is found in the plastid. The protein resides in the chloroplast. In terms of biological role, usually encoded in the trnK tRNA gene intron. Probably assists in splicing its own and other chloroplast group II introns. This chain is Maturase K, found in Silene latifolia (White campion).